A 555-amino-acid polypeptide reads, in one-letter code: High-affinity gluconate transporter ght3 (555 aa).

Topologically, residues 1 to 9 are cytoplasmic; it reads MNRFITSIL. Residues 10-30 traverse the membrane as a helical segment; that stretch reads VVFISMSGWLQGADTGSISGI. Residues 31-58 are Extracellular-facing; it reads LGMRDFQSRFADRYNPISNSYSYSAWRQ. The helical transmembrane segment at 59 to 79 threads the bilayer; it reads ALLTGTINAGCLFGAMLSSPF. Topologically, residues 80–87 are cytoplasmic; that stretch reads TERIGKKY. A helical membrane pass occupies residues 88–108; that stretch reads SICFFSGVYIIAELLLVTAVP. Residues 109 to 112 are Extracellular-facing; that stretch reads SWIQ. A helical membrane pass occupies residues 113 to 133; sequence VLVGKILAGVGIGALSVLSPG. The Cytoplasmic segment spans residues 134–144; it reads YQSEVAPPQIR. Residues 145–165 traverse the membrane as a helical segment; that stretch reads GAVVATYQIFSTGAALVAACI. At 166-179 the chain is on the extracellular side; the sequence is NMGTHKLRKTASWR. Residues 180–200 traverse the membrane as a helical segment; that stretch reads TSFGINMLWGILLMVGVLFLP. Topologically, residues 201 to 266 are cytoplasmic; that stretch reads ESPRYLIYKG…IFGKDIRYRT (66 aa). A helical membrane pass occupies residues 267–285; the sequence is CLGFLVMLFRELIGNNYYF. Topologically, residues 286–301 are extracellular; the sequence is YYATQVFKGTGMTDIF. Residues 302-322 traverse the membrane as a helical segment; it reads LPAVILGAINFGTTFGALYTI. Residues 323–328 lie on the Cytoplasmic side of the membrane; the sequence is DNLGRR. The chain crosses the membrane as a helical span at residues 329 to 349; sequence NPLIFGAAFQSICFFIYAAVG. Residues 350–363 lie on the Extracellular side of the membrane; the sequence is DRKLIYKNGTSDHR. An N-linked (GlcNAc...) asparagine glycan is attached at asparagine 357. A helical membrane pass occupies residues 364-384; sequence AGSVMIVFSCLFLFSYCCSWG. Topologically, residues 385-404 are cytoplasmic; it reads PMGWVIVGETFPIRYRSKCA. A helical membrane pass occupies residues 405–425; the sequence is SVATSGNWLGNFMISFFTPFI. The Extracellular segment spans residues 426–432; the sequence is NNAIGFK. Residues 433 to 453 traverse the membrane as a helical segment; it reads LGYIYACINLFSSFMIFFLAK. At 454–555 the chain is on the cytoplasmic side; that stretch reads ETKGLTLEEV…FSEDSHPTYI (102 aa). Basic and acidic residues predominate over residues 492 to 509; the sequence is KEEEKREREKSKGIRGQE. Positions 492-555 are disordered; it reads KEEEKREREK…FSEDSHPTYI (64 aa). Residues 510 to 521 are compositionally biased toward acidic residues; that stretch reads EEFIENADEDNN. The segment covering 522-534 has biased composition (low complexity); it reads DSSSSSGSVVSAV. Over residues 545 to 555 the composition is skewed to basic and acidic residues; it reads RFSEDSHPTYI.

It belongs to the major facilitator superfamily. Sugar transporter (TC 2.A.1.1) family.

The protein resides in the membrane. Functionally, high-affinity gluconate transporter. The protein is High-affinity gluconate transporter ght3 (ght3) of Schizosaccharomyces pombe (strain 972 / ATCC 24843) (Fission yeast).